A 473-amino-acid polypeptide reads, in one-letter code: Photosystem II CP43 reaction center protein (473 aa).

The propeptide occupies 1-14 (MKTLYSLRRFYHVE). Threonine 15 carries the N-acetylthreonine modification. At threonine 15 the chain carries Phosphothreonine. Helical transmembrane passes span 69-93 (LFEVAHFVPEKPMYEQGLILLPHLA), 134-155 (LLGPETLEESFPFFGYVWKDRN), 178-200 (KALYFGGVYDTWAPGGGDVRKIT), 255-275 (KPFAWARRALVWSGEAYLSYS), and 291-312 (WFNNTVYPSEFYGPTGPEASQA). Glutamate 367 serves as a coordination point for [CaMn4O5] cluster. The chain crosses the membrane as a helical span at residues 447-471 (RARAAAAGFEKGIDRDFEPVLSMTP).

The protein belongs to the PsbB/PsbC family. PsbC subfamily. As to quaternary structure, PSII is composed of 1 copy each of membrane proteins PsbA, PsbB, PsbC, PsbD, PsbE, PsbF, PsbH, PsbI, PsbJ, PsbK, PsbL, PsbM, PsbT, PsbX, PsbY, PsbZ, Psb30/Ycf12, at least 3 peripheral proteins of the oxygen-evolving complex and a large number of cofactors. It forms dimeric complexes. Requires Binds multiple chlorophylls and provides some of the ligands for the Ca-4Mn-5O cluster of the oxygen-evolving complex. It may also provide a ligand for a Cl- that is required for oxygen evolution. PSII binds additional chlorophylls, carotenoids and specific lipids. as cofactor.

Its subcellular location is the plastid. It is found in the chloroplast thylakoid membrane. Its function is as follows. One of the components of the core complex of photosystem II (PSII). It binds chlorophyll and helps catalyze the primary light-induced photochemical processes of PSII. PSII is a light-driven water:plastoquinone oxidoreductase, using light energy to abstract electrons from H(2)O, generating O(2) and a proton gradient subsequently used for ATP formation. The polypeptide is Photosystem II CP43 reaction center protein (Coffea arabica (Arabian coffee)).